Reading from the N-terminus, the 869-residue chain is Facilitated trehalose transporter Tret1 (869 aa).

2 disordered regions span residues 1–214 (MSGR…QKAT) and 258–315 (KESS…LIHR). Residues 1-404 (MSGRDNRGAG…VYRPTTNPIY (404 aa)) are Cytoplasmic-facing. Basic and acidic residues predominate over residues 25–43 (KLKEKLTRAGDDQGYHRVE). Low complexity-rich tracts occupy residues 44–57 (SNLSTSNTATSLDT), 79–92 (PQQQQQQQQRQQLR), and 118–127 (PFQQQQQRTP). Basic and acidic residues-rich tracts occupy residues 147–156 (EIREHRDRQQ) and 258–291 (KESSSEEEFHKTRREFQGRKHQSLDPRVTFKLDK). Phosphoserine occurs at positions 260, 261, 262, 332, and 334. Residues 336 to 368 (EDFHTSRQHFQQQRSISTDSRKSRRPYEMDEMG) form a disordered region. A compositionally biased stretch (polar residues) spans 343 to 353 (QHFQQQRSIST). Over residues 354-368 (DSRKSRRPYEMDEMG) the composition is skewed to basic and acidic residues. The helical transmembrane segment at 405-425 (IWTQVLAALSVSLGSLVVGFV) threads the bilayer. Residues 426 to 452 (SAYTSPALVSMTNRNMTSFEVTPQAAS) lie on the Extracellular side of the membrane. An N-linked (GlcNAc...) asparagine glycan is attached at Asn-440. A helical membrane pass occupies residues 453 to 473 (WVGGIMPLAGLAGGIAGGPFI). At 474–485 (EYLGRRNTILAT) the chain is on the cytoplasmic side. Residues 486–506 (AIPFIVSSLLIACAVNVAMVL) form a helical membrane-spanning segment. At 507–509 (AGR) the chain is on the extracellular side. The helical transmembrane segment at 510–530 (FLAGFCVGIASLSLPVYLGET) threads the bilayer. Residues 531–536 (VQPEVR) are Cytoplasmic-facing. A helical transmembrane segment spans residues 537 to 557 (GTLGLLPTAFGNIGILLCFVA). The Extracellular segment spans residues 558-564 (GTYMDWS). Residues 565 to 585 (MLAFLGAALPVPFLILMFLIP) traverse the membrane as a helical segment. Topologically, residues 586-654 (ETPRWFVSRG…NLKPLSISLG (69 aa)) are cytoplasmic. Residues 655 to 675 (LMFFQQLSGINAVIFYTVSIF) form a helical membrane-spanning segment. Over 676–685 (KDAGSTIDGN) the chain is Extracellular. A helical membrane pass occupies residues 686-706 (LCTIIVGIVNFMATFIATLLI). Residues 707–712 (DRAGRK) are Cytoplasmic-facing. The chain crosses the membrane as a helical span at residues 713–733 (ILLYVSNIAMIITLFVLGGFF). Topologically, residues 734–752 (YCKSHGQDVSQLGWLPLSC) are extracellular. Residues 753–773 (FVIYILGFSLGFGPIPWLMMG) form a helical membrane-spanning segment. The Cytoplasmic portion of the chain corresponds to 774-779 (EILPSK). Residues 780 to 800 (IRGSAASVATAFNWSCTFVVT) form a helical membrane-spanning segment. Over 801–813 (KTFQDMIDFMGAH) the chain is Extracellular. The chain crosses the membrane as a helical span at residues 814-834 (GAFWLFGSICFIGLFFVILYV). Topologically, residues 835-869 (PETQGKTLEDIERKMMGRVRRMSSVANMKPLAFNM) are cytoplasmic. Residues Ser-857 and Ser-858 each carry the phosphoserine modification.

The protein belongs to the major facilitator superfamily. Sugar transporter (TC 2.A.1.1) family. Trehalose transporter subfamily.

The protein localises to the cell membrane. Its function is as follows. Low-capacity facilitative transporter for trehalose. Does not transport maltose, sucrose or lactose. Mediates the bidirectional transfer of trehalose. Responsible for the transport of trehalose synthesized in the fat body and the incorporation of trehalose into other tissues that require a carbon source, thereby regulating trehalose levels in the hemolymph. The chain is Facilitated trehalose transporter Tret1 from Drosophila persimilis (Fruit fly).